A 61-amino-acid polypeptide reads, in one-letter code: Short neurotoxin 1 (61 aa).

Intrachain disulfides connect cysteine 3–cysteine 23, cysteine 17–cysteine 40, cysteine 42–cysteine 53, and cysteine 54–cysteine 59.

This sequence belongs to the three-finger toxin family. Short-chain subfamily. Type I alpha-neurotoxin sub-subfamily. As to expression, expressed by the venom gland.

The protein localises to the secreted. Its function is as follows. Binds to muscle nicotinic acetylcholine receptor (nAChR) and inhibit acetylcholine from binding to the receptor, thereby impairing neuromuscular transmission. In terms of biological role, produces peripheral paralysis by blocking neuromuscular transmission at the postsynaptic site. Binds to the muscular nicotinic acetylcholine receptor. The protein is Short neurotoxin 1 of Naja annulifera (Banded Egyptian cobra).